The primary structure comprises 551 residues: Alkaline/neutral invertase CINV1 (551 aa).

Methionine 1 carries the N-acetylmethionine modification. Residues serine 11, serine 14, serine 44, and serine 61 each carry the phosphoserine modification. The disordered stretch occupies residues threonine 50–serine 74. Residues serine 53 to arginine 63 show a composition bias toward basic and acidic residues. Residue threonine 70 is modified to Phosphothreonine. Serine 547 carries the post-translational modification Phosphoserine.

Belongs to the glycosyl hydrolase 100 family. Forms homohexamers. Interacts with PIP5K9. Interaction with PIP5K9 represses CINV1 activity. Interacts with GRF1, GRF2, GRF3, GRF4, GRF5, GRF6, GRF7, GRF8 and GRF10; these interactions are dependent of the phosphorylation at Ser-547. Post-translationally, phosphorylated at Ser-547 by CPK3 and CPK21. In terms of tissue distribution, expressed in radicle, hypocotyls, root tips and vascular cylinder, leaf vasculature, shoot stipules, trichomes, stem, stigma apex and base of siliques.

Its subcellular location is the cytoplasm. The protein resides in the cytosol. The protein localises to the nucleus. It carries out the reaction Hydrolysis of terminal non-reducing beta-D-fructofuranoside residues in beta-D-fructofuranosides.. Its function is as follows. Cytosolic invertase that specifically cleaves sucrose into glucose and fructose and is involved in the regulation of multiple tissue development including primary root elongation, root hair growth, leaf and silique development, and floral transition. Is involved in osmotic stress-induced inhibition on lateral root growth by controlling the concentration of hexose in cells. May regulate sugar-mediated root development by controlling sucrose catabolism in root cells. Contributes to carbon partitioning and cellulose biosynthesis in seedlings. The sequence is that of Alkaline/neutral invertase CINV1 from Arabidopsis thaliana (Mouse-ear cress).